Here is a 272-residue protein sequence, read N- to C-terminus: Aquaporin FA-CHIP (272 aa).

Residues 1–17 (MASEFKKKAFWRAVIAE) are Cytoplasmic-facing. Residues 18-35 (FLAMILFVFISIGAALGF) traverse the membrane as a helical segment. Topologically, residues 36–52 (NFPIEEKANQTVGRSQD) are extracellular. Residue N44 is glycosylated (N-linked (GlcNAc...) asparagine). A helical transmembrane segment spans residues 53 to 71 (IVKVSLAFGISIATMAQSV). Residues 72–97 (GHVSGAHLNPAVTLGCLLSCQISILK) lie on the Cytoplasmic side of the membrane. The NPA 1 signature appears at 80–82 (NPA). A helical membrane pass occupies residues 98–119 (AVMYIIAQCLGAVVATAILSGI). The Extracellular segment spans residues 120–139 (TSGLENNSLGLNGLSPGVSA). N125 carries N-linked (GlcNAc...) asparagine glycosylation. Residues 140 to 160 (GQGLGVEILVTFQLVLCVVAV) traverse the membrane as a helical segment. The Cytoplasmic segment spans residues 161–168 (TDRRRHDV). Residues 169–188 (SGSVPLAIGLSVALGHLIAI) form a helical membrane-spanning segment. The Extracellular portion of the chain corresponds to 189–214 (DYTGCGMNPARSFGSAVLTKNFTYHW). An NPA 2 motif is present at residues 196-198 (NPA). The N-linked (GlcNAc...) asparagine glycan is linked to N209. Residues 215–236 (IFWVGPMIGGAAAAIIYDFILA) form a helical membrane-spanning segment. The Cytoplasmic segment spans residues 237-272 (PRTSDLTDRMKVWTNGQVEEYELDGDDNTRVEMKPK).

Belongs to the MIP/aquaporin (TC 1.A.8) family.

Its subcellular location is the membrane. Forms a water-specific channel. The chain is Aquaporin FA-CHIP (AQPA) from Pelophylax lessonae (Pool frog).